We begin with the raw amino-acid sequence, 508 residues long: Cyclic AMP-responsive element-binding protein 5 (508 aa).

The segment at 16 to 40 adopts a C2H2-type zinc-finger fold; sequence FVCSAPGCSQRFPTEDHLMIHRHKH. Lys50 is covalently cross-linked (Glycyl lysine isopeptide (Lys-Gly) (interchain with G-Cter in SUMO2)). Phosphothreonine is present on residues Thr59 and Thr61. Ser137 carries the phosphoserine modification. The tract at residues 265–391 is disordered; that stretch reads RQDQTPHHHM…LERNRAAATR (127 aa). Composition is skewed to basic residues over residues 271-280 and 289-326; these read HHHMHSHPHQ and PYPH…HPAH. Over residues 337-346 the composition is skewed to polar residues; it reads TGNQAQVSPA. A compositionally biased stretch (low complexity) spans 347-357; sequence TQQMQPTQTIQ. Basic and acidic residues predominate over residues 369-386; sequence VVDEDPDERRRKFLERNR. Residues 375 to 438 enclose the bZIP domain; that stretch reads DERRRKFLER…AQLKQLLLTH (64 aa). The basic motif stretch occupies residues 377 to 397; it reads RRRKFLERNRAAATRCRQKRK. Residues 403 to 431 form a leucine-zipper region; it reads LEKKAEELTQTNMQLQNEVSMLKNEVAQL. Positions 449–468 are disordered; the sequence is ESQGYLSPESSPPASPVPAC.

It belongs to the bZIP family. As to quaternary structure, binds DNA as a homodimer or as a heterodimer with JUN or ATF2/CREBP1.

The protein localises to the nucleus. Functionally, binds to the cAMP response element and activates transcription. This Homo sapiens (Human) protein is Cyclic AMP-responsive element-binding protein 5 (CREB5).